The sequence spans 296 residues: 4-hydroxy-tetrahydrodipicolinate synthase (296 aa).

Thr-49 serves as a coordination point for pyruvate. Catalysis depends on Tyr-137, which acts as the Proton donor/acceptor. The active-site Schiff-base intermediate with substrate is the Lys-166. Ile-208 is a binding site for pyruvate.

This sequence belongs to the DapA family. In terms of assembly, homotetramer; dimer of dimers.

It localises to the cytoplasm. It catalyses the reaction L-aspartate 4-semialdehyde + pyruvate = (2S,4S)-4-hydroxy-2,3,4,5-tetrahydrodipicolinate + H2O + H(+). Its pathway is amino-acid biosynthesis; L-lysine biosynthesis via DAP pathway; (S)-tetrahydrodipicolinate from L-aspartate: step 3/4. Functionally, catalyzes the condensation of (S)-aspartate-beta-semialdehyde [(S)-ASA] and pyruvate to 4-hydroxy-tetrahydrodipicolinate (HTPA). This chain is 4-hydroxy-tetrahydrodipicolinate synthase, found in Chlorobium limicola (strain DSM 245 / NBRC 103803 / 6330).